Consider the following 352-residue polypeptide: S-adenosylmethionine:tRNA ribosyltransferase-isomerase (352 aa).

The protein belongs to the QueA family. Monomer.

The protein resides in the cytoplasm. It carries out the reaction 7-aminomethyl-7-carbaguanosine(34) in tRNA + S-adenosyl-L-methionine = epoxyqueuosine(34) in tRNA + adenine + L-methionine + 2 H(+). Its pathway is tRNA modification; tRNA-queuosine biosynthesis. In terms of biological role, transfers and isomerizes the ribose moiety from AdoMet to the 7-aminomethyl group of 7-deazaguanine (preQ1-tRNA) to give epoxyqueuosine (oQ-tRNA). In Bacteroides fragilis (strain ATCC 25285 / DSM 2151 / CCUG 4856 / JCM 11019 / LMG 10263 / NCTC 9343 / Onslow / VPI 2553 / EN-2), this protein is S-adenosylmethionine:tRNA ribosyltransferase-isomerase.